A 282-amino-acid polypeptide reads, in one-letter code: Bifunctional protein FolD (282 aa).

NADP(+) contacts are provided by residues 164–166 (GAS), Ile-189, and Ile-230.

Belongs to the tetrahydrofolate dehydrogenase/cyclohydrolase family. Homodimer.

The enzyme catalyses (6R)-5,10-methylene-5,6,7,8-tetrahydrofolate + NADP(+) = (6R)-5,10-methenyltetrahydrofolate + NADPH. The catalysed reaction is (6R)-5,10-methenyltetrahydrofolate + H2O = (6R)-10-formyltetrahydrofolate + H(+). Its pathway is one-carbon metabolism; tetrahydrofolate interconversion. Its function is as follows. Catalyzes the oxidation of 5,10-methylenetetrahydrofolate to 5,10-methenyltetrahydrofolate and then the hydrolysis of 5,10-methenyltetrahydrofolate to 10-formyltetrahydrofolate. This is Bifunctional protein FolD from Campylobacter jejuni (strain RM1221).